The chain runs to 900 residues: Alanine--tRNA ligase (900 aa).

Zn(2+)-binding residues include His604, His608, Cys708, and His712.

The protein belongs to the class-II aminoacyl-tRNA synthetase family. The cofactor is Zn(2+).

The protein localises to the cytoplasm. It catalyses the reaction tRNA(Ala) + L-alanine + ATP = L-alanyl-tRNA(Ala) + AMP + diphosphate. Functionally, catalyzes the attachment of alanine to tRNA(Ala) in a two-step reaction: alanine is first activated by ATP to form Ala-AMP and then transferred to the acceptor end of tRNA(Ala). Also edits incorrectly charged Ser-tRNA(Ala) and Gly-tRNA(Ala) via its editing domain. The protein is Alanine--tRNA ligase of Saccharolobus islandicus (strain Y.G.57.14 / Yellowstone #1) (Sulfolobus islandicus).